A 138-amino-acid chain; its full sequence is Phosphoribosyl-AMP cyclohydrolase (138 aa).

Residue aspartate 84 coordinates Mg(2+). Cysteine 85 lines the Zn(2+) pocket. Mg(2+) is bound by residues aspartate 86 and aspartate 88. Cysteine 102 and cysteine 109 together coordinate Zn(2+).

It belongs to the PRA-CH family. Homodimer. The cofactor is Mg(2+). Zn(2+) serves as cofactor.

The protein localises to the cytoplasm. It catalyses the reaction 1-(5-phospho-beta-D-ribosyl)-5'-AMP + H2O = 1-(5-phospho-beta-D-ribosyl)-5-[(5-phospho-beta-D-ribosylamino)methylideneamino]imidazole-4-carboxamide. Its pathway is amino-acid biosynthesis; L-histidine biosynthesis; L-histidine from 5-phospho-alpha-D-ribose 1-diphosphate: step 3/9. Catalyzes the hydrolysis of the adenine ring of phosphoribosyl-AMP. In Burkholderia vietnamiensis (strain G4 / LMG 22486) (Burkholderia cepacia (strain R1808)), this protein is Phosphoribosyl-AMP cyclohydrolase.